Here is a 294-residue protein sequence, read N- to C-terminus: Homoserine kinase (294 aa).

Position 84–94 (84–94) interacts with ATP; it reads PFSRGLGSSSA.

Belongs to the GHMP kinase family. Homoserine kinase subfamily.

The protein localises to the cytoplasm. The enzyme catalyses L-homoserine + ATP = O-phospho-L-homoserine + ADP + H(+). The protein operates within amino-acid biosynthesis; L-threonine biosynthesis; L-threonine from L-aspartate: step 4/5. In terms of biological role, catalyzes the ATP-dependent phosphorylation of L-homoserine to L-homoserine phosphate. The polypeptide is Homoserine kinase (Campylobacter concisus (strain 13826)).